A 211-amino-acid polypeptide reads, in one-letter code: Transcriptional regulatory protein RcsA (211 aa).

The HTH luxR-type domain occupies 135-200 (SEVHPFTLSQ…VIYHVVRLTD (66 aa)). The segment at residues 159 to 178 (TIQISDKMQIKAKTVSSHKG) is a DNA-binding region (H-T-H motif).

Belongs to the RcsA family.

Functionally, component of the Rcs signaling system, which controls transcription of numerous genes. Binds to DNA to regulate expression of genes. The chain is Transcriptional regulatory protein RcsA from Erwinia amylovora (Fire blight bacteria).